An 86-amino-acid polypeptide reads, in one-letter code: U13-theraphotoxin-Cg1b (86 aa).

A signal peptide spans 1–21; sequence MKVSVLITLAVLGVMFVWASA. A propeptide spanning residues 22–51 is cleaved from the precursor; the sequence is AELEQSGSDQKDSPAWLKSMERIFQSEERE. Disulfide bonds link Cys52/Cys66, Cys59/Cys71, and Cys65/Cys78.

It belongs to the neurotoxin 10 (Hwtx-1) family. 41 (Jztx-36) subfamily. Expressed by the venom gland.

It is found in the secreted. In terms of biological role, probable ion channel inhibitor. The protein is U13-theraphotoxin-Cg1b of Chilobrachys guangxiensis (Chinese earth tiger tarantula).